A 117-amino-acid polypeptide reads, in one-letter code: Peptidyl-tRNA hydrolase (117 aa).

The protein belongs to the PTH2 family.

The protein resides in the cytoplasm. The enzyme catalyses an N-acyl-L-alpha-aminoacyl-tRNA + H2O = an N-acyl-L-amino acid + a tRNA + H(+). Functionally, the natural substrate for this enzyme may be peptidyl-tRNAs which drop off the ribosome during protein synthesis. The polypeptide is Peptidyl-tRNA hydrolase (Thermoplasma volcanium (strain ATCC 51530 / DSM 4299 / JCM 9571 / NBRC 15438 / GSS1)).